The following is a 108-amino-acid chain: Anthranilate 1,2-dioxygenase ferredoxin subunit (108 aa).

The region spanning 9–105 is the Rieske domain; that stretch reads WHPLGAIDEF…IRIVDGQVEV (97 aa). 4 residues coordinate [2Fe-2S] cluster: cysteine 49, histidine 51, cysteine 68, and histidine 71.

Belongs to the bacterial ring-hydroxylating dioxygenase ferredoxin component family. Part of a multicomponent enzyme system composed of a reductase (AndAa), a ferredoxin (AndAb) and a two-subunit oxygenase component (AndAc and AndAd). The cofactor is [2Fe-2S] cluster.

The protein operates within aromatic compound metabolism; anthranilate degradation via hydroxylation; catechol from anthranilate: step 1/1. Functionally, part of the multicomponent anthranilate dioxygenase, that converts anthranilate to catechol. This protein seems to be a 2Fe-2S ferredoxin. In Burkholderia cepacia (Pseudomonas cepacia), this protein is Anthranilate 1,2-dioxygenase ferredoxin subunit.